We begin with the raw amino-acid sequence, 420 residues long: Putative zinc metalloprotease Lmo1318 (420 aa).

Residue H18 coordinates Zn(2+). E19 is an active-site residue. H22 contacts Zn(2+). 4 helical membrane passes run 172-194, 304-326, 347-369, and 393-412; these read TIFA…LAFV, NWIV…LDML, VLNW…LPAL, and GIIH…LVTW. The region spanning 176–267 is the PDZ domain; the sequence is GPLFNFILAI…DGKTQDIDVK (92 aa).

It belongs to the peptidase M50B family. Requires Zn(2+) as cofactor.

It is found in the cell membrane. The chain is Putative zinc metalloprotease Lmo1318 from Listeria monocytogenes serovar 1/2a (strain ATCC BAA-679 / EGD-e).